A 223-amino-acid polypeptide reads, in one-letter code: Urease accessory protein UreF (223 aa).

The protein belongs to the UreF family. UreD, UreF and UreG form a complex that acts as a GTP-hydrolysis-dependent molecular chaperone, activating the urease apoprotein by helping to assemble the nickel containing metallocenter of UreC. The UreE protein probably delivers the nickel.

It localises to the cytoplasm. In terms of biological role, required for maturation of urease via the functional incorporation of the urease nickel metallocenter. The protein is Urease accessory protein UreF of Sinorhizobium medicae (strain WSM419) (Ensifer medicae).